The following is a 209-amino-acid chain: Aspartate kinase-like protein lolA1 (209 aa).

Residues 1-11 are compositionally biased toward basic and acidic residues; sequence MLDESPMRKGD. The segment at 1–27 is disordered; that stretch reads MLDESPMRKGDSVSNDQSNPESNASVS. Over residues 12–27 the composition is skewed to polar residues; the sequence is SVSNDQSNPESNASVS.

The protein belongs to the aspartokinase family.

The protein operates within alkaloid biosynthesis. Functionally, aspartokinase-like protein; part of the gene cluster that mediates the biosynthesis of loline alkaloids, potent insecticidal agents composed of a pyrrolizidine ring system and an uncommon ether bridge linking carbons 2 and 7. Lolines are structurally differentiated by the various modifications of the L-amino group and include norloline, loline, N-methylloline, N-acetylloline, N-acetylnorloline, and N-formylloline. The first committed step is the condensation of O-acetyl-L-homoserine (derived from L-aspartic acid) and L-proline, probably catalyzed by the gamma-type pyridoxal 5'-phosphate(PLP)-dependent enzyme lolC, to give the diamino diacid, NACPP. Ensuing cyclization, decarboxylation, and acetylation steps yield 1-exo-acetamidopyrrolizidine (AcAP). LolO is required for installation of the ether bridge upon the pathway intermediate, 1-exo-acetamidopyrrolizidine (AcAP). In sequential 2-oxoglutarate- and O(2)-consuming steps, lolO removes hydrogens from C2 and C7 of AcAP to form both carbon-oxygen bonds in N-acetylnorloline (NANL), the precursor to all other lolines. The enzymes lolD, lolE, lolF and lolT have also been proposed to be involved in the ether-bridge installation. Further processing of the exocyclic moiety of NANL by fungal N-acetamidase (LolN), methyltransferase (LolM), and cytochrome P450 (LolP) enzymes, with occasional involvement of a plant acetyltransferase, generates the other known lolines. LolN transforms NANL to norlonine which is monomethylated and dimethylated to respectively lonine and N-methyllonine (NML) by lolM. LolP catalyzes hydroxylation of the methyl group in N-methylloline (NML) and further oxygenation to N-formylloline (NFL). A plant acetyltransferase is responsible for the acetylation of loline to form N-acetylloline (NAL). LolA might interact with aspartate kinase to prevent feedback inhibition of its activity by these end products and thereby promote production of L-homoserine from L-aspartate. The sequence is that of Aspartate kinase-like protein lolA1 from Epichloe uncinata (Endophyte fungus).